A 255-amino-acid chain; its full sequence is Small ribosomal subunit protein uS2 (255 aa).

The tract at residues 231 to 255 (RLQTGAEEEFSTEGEEVVEETPAEA) is disordered. The span at 236–255 (AEEEFSTEGEEVVEETPAEA) shows a compositional bias: acidic residues.

The protein belongs to the universal ribosomal protein uS2 family.

This Geobacter sp. (strain M21) protein is Small ribosomal subunit protein uS2.